Consider the following 91-residue polypeptide: Probable Fe(2+)-trafficking protein (91 aa).

Belongs to the Fe(2+)-trafficking protein family.

Functionally, could be a mediator in iron transactions between iron acquisition and iron-requiring processes, such as synthesis and/or repair of Fe-S clusters in biosynthetic enzymes. The polypeptide is Probable Fe(2+)-trafficking protein (Actinobacillus pleuropneumoniae serotype 5b (strain L20)).